The following is a 1100-amino-acid chain: Conjugal transfer protein TraA (1100 aa).

404–411 (GRAGAGKT) provides a ligand contact to ATP.

It belongs to the MobA/MobL family.

The polypeptide is Conjugal transfer protein TraA (traA) (Agrobacterium fabrum (strain C58 / ATCC 33970) (Agrobacterium tumefaciens (strain C58))).